A 140-amino-acid chain; its full sequence is Putative transmembrane protein 49 (140 aa).

The next 2 helical transmembrane spans lie at 23 to 43 (LIMSAIAGVIAGAFGGGIGGV) and 93 to 110 (IAVHYIVLFLRLAYRYMY).

It localises to the host membrane. The polypeptide is Putative transmembrane protein 49 (SIFV0049) (Saccharolobus islandicus (Sulfolobus islandicus)).